A 173-amino-acid chain; its full sequence is RNA silencing suppressor p19 (173 aa).

Residues 1-21 (MERAIQRSDAREQANSERWDG) are compositionally biased toward basic and acidic residues. The tract at residues 1 to 34 (MERAIQRSDAREQANSERWDGRCGGTITPFKLPD) is disordered.

The protein belongs to the tombusvirus protein p19 family. As to quaternary structure, homodimer.

In terms of biological role, viral suppressor of RNA silencing which binds specifically to silencing RNAs (siRNAs). Acts as a molecular caliper to specifically select siRNAs based on the length of the duplex region of the RNA. The sequence is that of RNA silencing suppressor p19 from Cucumis sativus (Cucumber).